The following is a 601-amino-acid chain: Elongation factor 4 (601 aa).

The 183-residue stretch at 5–187 (ENIRNFCIVA…AIITTFPPPK (183 aa)) folds into the tr-type G domain. Residues 17–22 (DHGKST) and 134–137 (NKID) each bind GTP.

Belongs to the TRAFAC class translation factor GTPase superfamily. Classic translation factor GTPase family. LepA subfamily.

The protein localises to the cell inner membrane. It catalyses the reaction GTP + H2O = GDP + phosphate + H(+). In terms of biological role, required for accurate and efficient protein synthesis under certain stress conditions. May act as a fidelity factor of the translation reaction, by catalyzing a one-codon backward translocation of tRNAs on improperly translocated ribosomes. Back-translocation proceeds from a post-translocation (POST) complex to a pre-translocation (PRE) complex, thus giving elongation factor G a second chance to translocate the tRNAs correctly. Binds to ribosomes in a GTP-dependent manner. In Treponema denticola (strain ATCC 35405 / DSM 14222 / CIP 103919 / JCM 8153 / KCTC 15104), this protein is Elongation factor 4.